Consider the following 86-residue polypeptide: Large ribosomal subunit protein bL27 (86 aa).

The span at 1–11 (MATKKAGGGSR) shows a compositional bias: gly residues. The segment at 1–24 (MATKKAGGGSRNGRDSAGRRLGVK) is disordered.

The protein belongs to the bacterial ribosomal protein bL27 family.

The polypeptide is Large ribosomal subunit protein bL27 (Rickettsia africae (strain ESF-5)).